Here is a 538-residue protein sequence, read N- to C-terminus: Cytochrome P450 monooxygenase verH (538 aa).

The helical transmembrane segment at 2–21 (VFAMLVVCWSIFLGLWMLVS) threads the bilayer. Cysteine 445 provides a ligand contact to heme.

It belongs to the cytochrome P450 family. Requires heme as cofactor.

It localises to the membrane. It functions in the pathway secondary metabolite biosynthesis; terpenoid biosynthesis. It participates in mycotoxin biosynthesis. Its function is as follows. Cytochrome P450 monooxygenase; part of the gene cluster that mediates the biosynthesis of the neurotoxin verrucosidin, a methylated alpha-pyrone polyketide that inhibits oxidative phosphorylation in mitochondria and thereby causes neurological diseases. The carbon backbone of verrucosidin is synthesized by the HR-PKS verA, and further modified by the other verrucodidin cluster enzymes. The protein is Cytochrome P450 monooxygenase verH of Penicillium polonicum.